The chain runs to 405 residues: Riboflavin biosynthesis protein RibBA (405 aa).

The interval 1–205 (MSEIQLNTIE…IKDLIAYRLR (205 aa)) is DHBP synthase. D-ribulose 5-phosphate contacts are provided by residues 30 to 31 (RE), Asp35, 144 to 148 (RAGHT), and Glu168. Glu31 is a Mg(2+) binding site. Position 147 (His147) interacts with Mg(2+). The segment at 206–405 (TESIVENGVE…RMGHVLHNIK (200 aa)) is GTP cyclohydrolase II. 256 to 260 (RVHSS) lines the GTP pocket. Residues Cys261, Cys272, and Cys274 each coordinate Zn(2+). GTP contacts are provided by residues Gln277, 299-301 (EGR), and Thr321. Asp333 (proton acceptor; for GTP cyclohydrolase activity) is an active-site residue. The active-site Nucleophile; for GTP cyclohydrolase activity is the Arg335. GTP-binding residues include Ser356 and Lys361.

It in the N-terminal section; belongs to the DHBP synthase family. The protein in the C-terminal section; belongs to the GTP cyclohydrolase II family. Mg(2+) is required as a cofactor. The cofactor is Mn(2+). It depends on Zn(2+) as a cofactor.

The enzyme catalyses D-ribulose 5-phosphate = (2S)-2-hydroxy-3-oxobutyl phosphate + formate + H(+). It carries out the reaction GTP + 4 H2O = 2,5-diamino-6-hydroxy-4-(5-phosphoribosylamino)-pyrimidine + formate + 2 phosphate + 3 H(+). It participates in cofactor biosynthesis; riboflavin biosynthesis; 2-hydroxy-3-oxobutyl phosphate from D-ribulose 5-phosphate: step 1/1. Its pathway is cofactor biosynthesis; riboflavin biosynthesis; 5-amino-6-(D-ribitylamino)uracil from GTP: step 1/4. In terms of biological role, catalyzes the conversion of D-ribulose 5-phosphate to formate and 3,4-dihydroxy-2-butanone 4-phosphate. Functionally, catalyzes the conversion of GTP to 2,5-diamino-6-ribosylamino-4(3H)-pyrimidinone 5'-phosphate (DARP), formate and pyrophosphate. The polypeptide is Riboflavin biosynthesis protein RibBA (Parabacteroides distasonis (strain ATCC 8503 / DSM 20701 / CIP 104284 / JCM 5825 / NCTC 11152)).